The primary structure comprises 556 residues: Delta-1-pyrroline-5-carboxylate dehydrogenase 12A1, mitochondrial (556 aa).

282 to 287 is a binding site for NAD(+); that stretch reads GSSRVA. Glu301 (proton acceptor) is an active-site residue. Catalysis depends on Cys336, which acts as the Nucleophile.

This sequence belongs to the aldehyde dehydrogenase family. Highly expressed in flowers. Constitutively expressed at low levels in the other tissues. Highly expressed in pollen grains and tissues undergoing cell death. Expressed in old leaves, mature siliques and developing embryos.

Its subcellular location is the mitochondrion matrix. The catalysed reaction is (S)-1-pyrroline-5-carboxylate + NAD(+) + 2 H2O = L-glutamate + NADH + H(+). Its pathway is amino-acid degradation; L-proline degradation into L-glutamate; L-glutamate from L-proline: step 2/2. Functionally, plays a role in the inhibition of programmed cell death by converting the toxic proline catabolism intermediate (s)-1-pyrroline-5-carboxylate (P5C) to glutamate. The sequence is that of Delta-1-pyrroline-5-carboxylate dehydrogenase 12A1, mitochondrial from Arabidopsis thaliana (Mouse-ear cress).